The primary structure comprises 287 residues: tRNA-cytidine(32) 2-sulfurtransferase (287 aa).

The PP-loop motif motif lies at 58 to 63; the sequence is SGGKDS. [4Fe-4S] cluster is bound by residues cysteine 133, cysteine 136, and cysteine 224.

It belongs to the TtcA family. Homodimer. Mg(2+) is required as a cofactor. The cofactor is [4Fe-4S] cluster.

The protein resides in the cytoplasm. It catalyses the reaction cytidine(32) in tRNA + S-sulfanyl-L-cysteinyl-[cysteine desulfurase] + AH2 + ATP = 2-thiocytidine(32) in tRNA + L-cysteinyl-[cysteine desulfurase] + A + AMP + diphosphate + H(+). The protein operates within tRNA modification. Its function is as follows. Catalyzes the ATP-dependent 2-thiolation of cytidine in position 32 of tRNA, to form 2-thiocytidine (s(2)C32). The sulfur atoms are provided by the cysteine/cysteine desulfurase (IscS) system. This Dinoroseobacter shibae (strain DSM 16493 / NCIMB 14021 / DFL 12) protein is tRNA-cytidine(32) 2-sulfurtransferase.